The following is a 174-amino-acid chain: Large ribosomal subunit protein uL10 (174 aa).

It belongs to the universal ribosomal protein uL10 family. Part of the ribosomal stalk of the 50S ribosomal subunit. The N-terminus interacts with L11 and the large rRNA to form the base of the stalk. The C-terminus forms an elongated spine to which L12 dimers bind in a sequential fashion forming a multimeric L10(L12)X complex.

Forms part of the ribosomal stalk, playing a central role in the interaction of the ribosome with GTP-bound translation factors. This chain is Large ribosomal subunit protein uL10, found in Pelobacter propionicus (strain DSM 2379 / NBRC 103807 / OttBd1).